A 348-amino-acid polypeptide reads, in one-letter code: MNDRQAALDQALKQIEKQFGKGSIMKLGEHSDQNISTISSGSLALDIALGVGGYPRGRIIEVYGPESSGKTTVALHAIAEVQAQGGTAAFIDAEHALDPAYAKNLGVNIDELLLSQPDTGEQALEIAEALVRSGAVDMLVIDSVAALVPRAEIEGEMGDAHVGLQARLMSQALRKLSGAINKSKTIAIFINQIREKVGVMFGNPEITPGGRALKFYSTVRLEVRRAEQLKQGTDVMGNKTKIKVVKNKVAPPFRIAEVDIMYGEGISREGELVDMAAEVDVINKSGSWYSYKEERIGQGRENAKQYLKEHTDIRDEISKRVREEYEIDGASKEPLEETEETLSLLDDE.

ATP is bound at residue 64-71 (GPESSGKT). Positions 325-335 (YEIDGASKEPL) are enriched in basic and acidic residues. Positions 325–348 (YEIDGASKEPLEETEETLSLLDDE) are disordered. Acidic residues predominate over residues 336-348 (EETEETLSLLDDE).

This sequence belongs to the RecA family.

The protein resides in the cytoplasm. In terms of biological role, can catalyze the hydrolysis of ATP in the presence of single-stranded DNA, the ATP-dependent uptake of single-stranded DNA by duplex DNA, and the ATP-dependent hybridization of homologous single-stranded DNAs. It interacts with LexA causing its activation and leading to its autocatalytic cleavage. The polypeptide is Protein RecA (Listeria seeligeri).